The primary structure comprises 610 residues: MFDAKAFLADVPHLPGVYRMYDAKNTIIYVGKAKDLKKRLSSYFRSQLASKKTEALVANIHHIETTITHSETEALLLEHNYIKENQPKYNVLLRDDKSYPYILLTKHQHPRITSFRGSKKVAGEYFGPYPNAGAVRETLNLLQKLFPIRQCEDSYYKNRSRPCLQYQIGRCLAPCVEGYYSQAEYDNQVNLVRLFLQGKDGQVVEHLVQKMENAAQELDFEAAARFRDQIQSVRAVQEKQFVSNERLDDLDIISIAYQHGIACVHILFVRHGKVLGNRSYFPKVPNNTDLTELADTFVGQFYLQMNQHRTIPNQIIIDQPLSEATALANVLSEQAGHKVSIADKNIRGDKSRYLALAKTNAEAALTLQLKQDTHIRQRYDSLKALLNLAEIKRMECFDISHTMGNQTVASCVVFDENGPLKSDYRRFNIEGITGGDDYAAMEQALLKRYGRHLEEEKIPDIIFIDGGKGQLNRALETFASLNVSWDKRKPLLIGVAKGVERKAGLETLLISKWDKEIHLPPDSPALHLIQHIRDESHNHAITGHRKKRQKAFTESGLESIAGVGAKRRQALLKYLGGMQGVKSATLEEIQSVPGISKQLAEVIFDTLQHS.

The 79-residue stretch at 13–91 (HLPGVYRMYD…IKENQPKYNV (79 aa)) folds into the GIY-YIG domain. Residues 201–236 (GQVVEHLVQKMENAAQELDFEAAARFRDQIQSVRAV) enclose the UVR domain.

The protein belongs to the UvrC family. As to quaternary structure, interacts with UvrB in an incision complex.

It localises to the cytoplasm. The UvrABC repair system catalyzes the recognition and processing of DNA lesions. UvrC both incises the 5' and 3' sides of the lesion. The N-terminal half is responsible for the 3' incision and the C-terminal half is responsible for the 5' incision. The sequence is that of UvrABC system protein C from Actinobacillus pleuropneumoniae serotype 7 (strain AP76).